The following is a 745-amino-acid chain: Pentatricopeptide repeat-containing protein At1g71420 (745 aa).

PPR repeat units lie at residues 58-88, 95-125, 126-160, 191-224, 225-259, 260-296, 301-332, 334-367, 368-402, 403-437, 438-464, 466-496, and 502-532; these read SQQA…MLSH, NVIL…MPER, NVVS…CFPN, SIYV…IKFK, NLVT…GVGF, DRAT…TVKS, QTEV…MSHC, DIVA…KLSP, DWYT…GFLA, DTVL…DVVS, WNSM…MDIN, DSAT…MFEK, and QLNH…MPMD. A type E motif region spans residues 537-613; that stretch reads VWIALLGSCR…EPDLSWTEIG (77 aa). The interval 614–644 is type E(+) motif; the sequence is NKVHEFASGGRHRPDKEAVYRELKRLISWLK. Positions 645–745 are type DYW motif; that stretch reads EMGYVPEMRS…DSSCSCNDYW (101 aa).

The protein belongs to the PPR family. PCMP-H subfamily.

This is Pentatricopeptide repeat-containing protein At1g71420 (PCMP-H70) from Arabidopsis thaliana (Mouse-ear cress).